Reading from the N-terminus, the 429-residue chain is Serine--tRNA ligase (429 aa).

Residue 236–238 (TAE) participates in L-serine binding. 267 to 269 (RSE) lines the ATP pocket. E290 provides a ligand contact to L-serine. Residue 354–357 (EISS) participates in ATP binding. S390 is an L-serine binding site.

This sequence belongs to the class-II aminoacyl-tRNA synthetase family. Type-1 seryl-tRNA synthetase subfamily. As to quaternary structure, homodimer. The tRNA molecule binds across the dimer.

The protein resides in the cytoplasm. The catalysed reaction is tRNA(Ser) + L-serine + ATP = L-seryl-tRNA(Ser) + AMP + diphosphate + H(+). It catalyses the reaction tRNA(Sec) + L-serine + ATP = L-seryl-tRNA(Sec) + AMP + diphosphate + H(+). The protein operates within aminoacyl-tRNA biosynthesis; selenocysteinyl-tRNA(Sec) biosynthesis; L-seryl-tRNA(Sec) from L-serine and tRNA(Sec): step 1/1. In terms of biological role, catalyzes the attachment of serine to tRNA(Ser). Is also able to aminoacylate tRNA(Sec) with serine, to form the misacylated tRNA L-seryl-tRNA(Sec), which will be further converted into selenocysteinyl-tRNA(Sec). This chain is Serine--tRNA ligase, found in Photorhabdus laumondii subsp. laumondii (strain DSM 15139 / CIP 105565 / TT01) (Photorhabdus luminescens subsp. laumondii).